The sequence spans 913 residues: Calcium-activated chloride channel regulator 1 (913 aa).

Residues 1–21 (MGPFKSSVFILILHLLEGALS) form the signal peptide. The interval 46–199 (DETLIQQIKD…GITGKIEVNK (154 aa)) is metalloprotease domain. Histidine 156 contributes to the Zn(2+) binding site. Residue glutamate 157 is part of the active site. Zn(2+) contacts are provided by histidine 160 and aspartate 167. One can recognise a VWFA domain in the interval 306 to 475 (IVCLVLDKSG…NGLIDAFGAL (170 aa)). N-linked (GlcNAc...) asparagine glycosylation is found at asparagine 503, asparagine 769, asparagine 803, asparagine 809, asparagine 830, asparagine 835, asparagine 885, and asparagine 889. Positions 866 to 885 (PPQTPPETPSPDETSAPCPN) are disordered.

It belongs to the CLCR family. In terms of processing, glycosylated. The translation product is autoproteolytically cleaved by the metalloprotease domain in the endoplasmic reticulum into a N-terminal and a C-terminal products that remain physically associated with each other. The cleavage is necessary for calcium-activated chloride channel (CaCC) activation activity.

It localises to the secreted. Its subcellular location is the extracellular space. May be involved in mediating calcium-activated chloride conductance. May play critical roles in goblet cell metaplasia, mucus hypersecretion, cystic fibrosis and AHR. May be involved in the regulation of mucus production and/or secretion by goblet cells. Involved in the regulation of tissue inflammation in the innate immune response. May play a role as a tumor suppressor. Induces MUC5AC. The protein is Calcium-activated chloride channel regulator 1 (CLCA1) of Macaca mulatta (Rhesus macaque).